Reading from the N-terminus, the 176-residue chain is Oligoribonuclease (176 aa).

One can recognise an Exonuclease domain in the interval 2-159; that stretch reads EMTGLNPETD…DDILESIEEM (158 aa). The active site involves Tyr-117.

Belongs to the oligoribonuclease family.

It is found in the cytoplasm. Functionally, 3'-to-5' exoribonuclease specific for small oligoribonucleotides. This chain is Oligoribonuclease, found in Neisseria gonorrhoeae (strain ATCC 700825 / FA 1090).